The following is a 338-amino-acid chain: Methionine import ATP-binding protein MetN 1 (338 aa).

One can recognise an ABC transporter domain in the interval 2 to 241 (IELHQVSKSF…AKHATTKRFV (240 aa)). Residue 38–45 (GYSGAGKS) participates in ATP binding.

It belongs to the ABC transporter superfamily. Methionine importer (TC 3.A.1.24) family. In terms of assembly, the complex is composed of two ATP-binding proteins (MetN), two transmembrane proteins (MetI) and a solute-binding protein (MetQ).

It is found in the cell membrane. The catalysed reaction is L-methionine(out) + ATP + H2O = L-methionine(in) + ADP + phosphate + H(+). The enzyme catalyses D-methionine(out) + ATP + H2O = D-methionine(in) + ADP + phosphate + H(+). Its function is as follows. Part of the ABC transporter complex MetNIQ involved in methionine import. Responsible for energy coupling to the transport system. This chain is Methionine import ATP-binding protein MetN 1, found in Listeria monocytogenes serovar 1/2a (strain ATCC BAA-679 / EGD-e).